We begin with the raw amino-acid sequence, 353 residues long: Nicotinate-nucleotide--dimethylbenzimidazole phosphoribosyltransferase (353 aa).

E318 acts as the Proton acceptor in catalysis.

Belongs to the CobT family.

It catalyses the reaction 5,6-dimethylbenzimidazole + nicotinate beta-D-ribonucleotide = alpha-ribazole 5'-phosphate + nicotinate + H(+). It participates in nucleoside biosynthesis; alpha-ribazole biosynthesis; alpha-ribazole from 5,6-dimethylbenzimidazole: step 1/2. Catalyzes the synthesis of alpha-ribazole-5'-phosphate from nicotinate mononucleotide (NAMN) and 5,6-dimethylbenzimidazole (DMB). The chain is Nicotinate-nucleotide--dimethylbenzimidazole phosphoribosyltransferase from Desulforudis audaxviator (strain MP104C).